Consider the following 223-residue polypeptide: MIENLRKRSTIEVEWRKQPVHMDIDLDQVDNPEAYPITVSVETSKDGSDPGLLWQPMHAERDSIVKETIHAKYVLGCDGARSWIRQRLGVSFIGDLTDSTWGVMDIVPKTSFPDIRKVAVIHSSKGTVMSVPREDKLVRFYIQIDAVNPNAASGLARRDLKVEDLLDAARAIMFPYTMEAAECAWWSAYRVGQRVANEFARHDRIFLAGDSVREYCLEVIRCQ.

FAD-binding positions include 139–141 (RFY), Y189, and D210.

It belongs to the PheA/TfdB FAD monooxygenase family.

The protein operates within secondary metabolite biosynthesis. FAD-dependent monooxygenase; part of the gene cluster that mediates the biosynthesis of imizoquins A to D, tripeptide-derived alkaloids that serve a protective role against oxidative stress that are essential for normal germination. ImqB is a canonical three-module NRPS that assembles the tripeptide backbone of the imizoquins via condensation of Trp, Tyr, and Leu-derived precursors. N-methylation by imqF and phenol oxidation by imqC, followed by cyclization via the FAD-dependent oxidase imqH carry out the three-step transformation of L-tyrosine into tetrahydroisoquinoline. Importantly, this sequence requires the presence of a free amine in the tyrosine moiety, indicating that isoquinoline formation occurs prior to peptide bond formation. The imidazolidin-4-one ring of imizoquins could form following additional oxidation of the methyl-derived bridgehead carbon by imqH. Lastly, O-methylation by imqG and leucine hydroxylation by imqE complete biosynthesis of the imizoquins. The sequence is that of FAD-dependent monooxygenase imqC from Aspergillus flavus (strain ATCC 200026 / FGSC A1120 / IAM 13836 / NRRL 3357 / JCM 12722 / SRRC 167).